The sequence spans 183 residues: Archaemetzincin (183 aa).

A Zn(2+)-binding site is contributed by histidine 131. Glutamate 132 acts as the Proton acceptor in catalysis. Positions 135, 141, 142, 147, 166, and 169 each coordinate Zn(2+).

Belongs to the peptidase M54 family. In terms of assembly, monomer. Requires Zn(2+) as cofactor.

In terms of biological role, probable zinc metalloprotease whose natural substrate is unknown. This Saccharolobus islandicus (strain L.S.2.15 / Lassen #1) (Sulfolobus islandicus) protein is Archaemetzincin.